Reading from the N-terminus, the 359-residue chain is 3-dehydroquinate synthase (359 aa).

Residues aspartate 71–lysine 76, glycine 105–aspartate 109, threonine 129–threonine 130, lysine 142, lysine 151, and cysteine 169–threonine 172 contribute to the NAD(+) site. Zn(2+) is bound by residues glutamate 184, histidine 247, and histidine 264.

Belongs to the sugar phosphate cyclases superfamily. Dehydroquinate synthase family. Co(2+) is required as a cofactor. The cofactor is Zn(2+). It depends on NAD(+) as a cofactor.

The protein resides in the cytoplasm. The catalysed reaction is 7-phospho-2-dehydro-3-deoxy-D-arabino-heptonate = 3-dehydroquinate + phosphate. It participates in metabolic intermediate biosynthesis; chorismate biosynthesis; chorismate from D-erythrose 4-phosphate and phosphoenolpyruvate: step 2/7. Its function is as follows. Catalyzes the conversion of 3-deoxy-D-arabino-heptulosonate 7-phosphate (DAHP) to dehydroquinate (DHQ). The sequence is that of 3-dehydroquinate synthase from Shewanella putrefaciens (strain CN-32 / ATCC BAA-453).